Here is a 105-residue protein sequence, read N- to C-terminus: Gastrin/cholecystokinin-like peptide (105 aa).

The signal sequence occupies residues 1-20 (MKTKVFLGLILSAAVTACLC). The propeptide occupies 21 to 38 (RPAAKAPGGSHRPTSSLA). Residues 24–51 (AKAPGGSHRPTSSLARRDWPEPPSQEQQ) are disordered. At Tyr87 the chain carries Sulfotyrosine. Phe93 carries the phenylalanine amide modification. Positions 97–105 (STEDAADAA) are excised as a propeptide.

Belongs to the gastrin/cholecystokinin family.

It localises to the secreted. Functionally, potent stimulus of gastric acid, but not of pancreatic secretion. This chain is Gastrin/cholecystokinin-like peptide, found in Gallus gallus (Chicken).